A 278-amino-acid chain; its full sequence is Shikimate dehydrogenase (NADP(+)) (278 aa).

Residues 19–21 (SLS) and T66 each bind shikimate. Catalysis depends on K70, which acts as the Proton acceptor. 2 residues coordinate shikimate: N91 and D106. Residues 130-134 (GAGGS), 152-157 (NRTVEK), and L222 each bind NADP(+). Y224 serves as a coordination point for shikimate. G245 lines the NADP(+) pocket.

This sequence belongs to the shikimate dehydrogenase family. As to quaternary structure, homodimer.

It carries out the reaction shikimate + NADP(+) = 3-dehydroshikimate + NADPH + H(+). It functions in the pathway metabolic intermediate biosynthesis; chorismate biosynthesis; chorismate from D-erythrose 4-phosphate and phosphoenolpyruvate: step 4/7. Its function is as follows. Involved in the biosynthesis of the chorismate, which leads to the biosynthesis of aromatic amino acids. Catalyzes the reversible NADPH linked reduction of 3-dehydroshikimate (DHSA) to yield shikimate (SA). In Methanococcus aeolicus (strain ATCC BAA-1280 / DSM 17508 / OCM 812 / Nankai-3), this protein is Shikimate dehydrogenase (NADP(+)).